The following is a 321-amino-acid chain: 4-hydroxy-3-methylbut-2-enyl diphosphate reductase (321 aa).

Residue Cys12 coordinates [4Fe-4S] cluster. Residues His41 and His74 each coordinate (2E)-4-hydroxy-3-methylbut-2-enyl diphosphate. Dimethylallyl diphosphate contacts are provided by His41 and His74. Isopentenyl diphosphate contacts are provided by His41 and His74. Cys96 lines the [4Fe-4S] cluster pocket. His124 lines the (2E)-4-hydroxy-3-methylbut-2-enyl diphosphate pocket. His124 serves as a coordination point for dimethylallyl diphosphate. Isopentenyl diphosphate is bound at residue His124. Glu126 serves as the catalytic Proton donor. Thr167 serves as a coordination point for (2E)-4-hydroxy-3-methylbut-2-enyl diphosphate. [4Fe-4S] cluster is bound at residue Cys197. Positions 225, 226, 227, and 269 each coordinate (2E)-4-hydroxy-3-methylbut-2-enyl diphosphate. Dimethylallyl diphosphate-binding residues include Ser225, Ser226, Asn227, and Ser269. 4 residues coordinate isopentenyl diphosphate: Ser225, Ser226, Asn227, and Ser269.

It belongs to the IspH family. As to quaternary structure, homodimer. Requires [4Fe-4S] cluster as cofactor.

The enzyme catalyses isopentenyl diphosphate + 2 oxidized [2Fe-2S]-[ferredoxin] + H2O = (2E)-4-hydroxy-3-methylbut-2-enyl diphosphate + 2 reduced [2Fe-2S]-[ferredoxin] + 2 H(+). It catalyses the reaction dimethylallyl diphosphate + 2 oxidized [2Fe-2S]-[ferredoxin] + H2O = (2E)-4-hydroxy-3-methylbut-2-enyl diphosphate + 2 reduced [2Fe-2S]-[ferredoxin] + 2 H(+). The protein operates within isoprenoid biosynthesis; dimethylallyl diphosphate biosynthesis; dimethylallyl diphosphate from (2E)-4-hydroxy-3-methylbutenyl diphosphate: step 1/1. It functions in the pathway isoprenoid biosynthesis; isopentenyl diphosphate biosynthesis via DXP pathway; isopentenyl diphosphate from 1-deoxy-D-xylulose 5-phosphate: step 6/6. Functionally, catalyzes the conversion of 1-hydroxy-2-methyl-2-(E)-butenyl 4-diphosphate (HMBPP) into a mixture of isopentenyl diphosphate (IPP) and dimethylallyl diphosphate (DMAPP). Acts in the terminal step of the DOXP/MEP pathway for isoprenoid precursor biosynthesis. The sequence is that of 4-hydroxy-3-methylbut-2-enyl diphosphate reductase from Escherichia coli O6:K15:H31 (strain 536 / UPEC).